A 142-amino-acid chain; its full sequence is 3-hydroxyacyl-[acyl-carrier-protein] dehydratase FabZ (142 aa).

His-48 is an active-site residue.

The protein belongs to the thioester dehydratase family. FabZ subfamily.

It is found in the cytoplasm. The enzyme catalyses a (3R)-hydroxyacyl-[ACP] = a (2E)-enoyl-[ACP] + H2O. Its function is as follows. Involved in unsaturated fatty acids biosynthesis. Catalyzes the dehydration of short chain beta-hydroxyacyl-ACPs and long chain saturated and unsaturated beta-hydroxyacyl-ACPs. This chain is 3-hydroxyacyl-[acyl-carrier-protein] dehydratase FabZ, found in Natranaerobius thermophilus (strain ATCC BAA-1301 / DSM 18059 / JW/NM-WN-LF).